Consider the following 431-residue polypeptide: Histidinol dehydrogenase (431 aa).

NAD(+) contacts are provided by Tyr-127, Gln-189, and Asn-212. The substrate site is built by Ser-237, Gln-259, and His-262. 2 residues coordinate Zn(2+): Gln-259 and His-262. Catalysis depends on proton acceptor residues Glu-326 and His-327. The substrate site is built by His-327, Asp-360, Glu-414, and His-419. Asp-360 serves as a coordination point for Zn(2+). His-419 lines the Zn(2+) pocket.

It belongs to the histidinol dehydrogenase family. It depends on Zn(2+) as a cofactor.

It carries out the reaction L-histidinol + 2 NAD(+) + H2O = L-histidine + 2 NADH + 3 H(+). It functions in the pathway amino-acid biosynthesis; L-histidine biosynthesis; L-histidine from 5-phospho-alpha-D-ribose 1-diphosphate: step 9/9. Its function is as follows. Catalyzes the sequential NAD-dependent oxidations of L-histidinol to L-histidinaldehyde and then to L-histidine. The polypeptide is Histidinol dehydrogenase (Xanthomonas axonopodis pv. citri (strain 306)).